Consider the following 545-residue polypeptide: Chaperonin GroEL (545 aa).

Residues 30–33 (TLGP), Lys-51, 87–91 (DGTTT), Gly-415, and Asp-496 each bind ATP.

It belongs to the chaperonin (HSP60) family. In terms of assembly, forms a cylinder of 14 subunits composed of two heptameric rings stacked back-to-back. Interacts with the co-chaperonin GroES.

It is found in the cytoplasm. It carries out the reaction ATP + H2O + a folded polypeptide = ADP + phosphate + an unfolded polypeptide.. Together with its co-chaperonin GroES, plays an essential role in assisting protein folding. The GroEL-GroES system forms a nano-cage that allows encapsulation of the non-native substrate proteins and provides a physical environment optimized to promote and accelerate protein folding. In Haemophilus influenzae (strain 86-028NP), this protein is Chaperonin GroEL.